The chain runs to 460 residues: Muscarinic acetylcholine receptor M1 (460 aa).

Residues 1–22 (MNTSAPPAVSPNITVLAPGKGP) are Extracellular-facing. 2 N-linked (GlcNAc...) asparagine glycosylation sites follow: Asn2 and Asn12. The helical transmembrane segment at 23-48 (WQVAFIGITTGLLSLATVTGNLLVLI) threads the bilayer. The Cytoplasmic segment spans residues 49–62 (SFKVNTELKTVNNY). A helical transmembrane segment spans residues 63–84 (FLLSLACADLIIGTFSMNLYTT). The Extracellular portion of the chain corresponds to 85–95 (YLLMGHWALGT). The helical transmembrane segment at 96–121 (LACDLWLALDYVASNASVMNLLLISF) threads the bilayer. A disulfide bridge links Cys98 with Cys178. Topologically, residues 122–142 (DRYFSVTRPLSYRAKRTPRRA) are cytoplasmic. The helical transmembrane segment at 143–164 (ALMIGLAWLVSFVLWAPAILFW) threads the bilayer. At 165 to 185 (QYLVGERTVLAGQCYIQFLSQ) the chain is on the extracellular side. Residues 186 to 209 (PIITFGTAMAAFYLPVTVMCTLYW) traverse the membrane as a helical segment. The Cytoplasmic portion of the chain corresponds to 210-366 (RIYRETENRA…LVKEKKAART (157 aa)). 3 disordered regions span residues 225–256 (LQGS…ETPP), 274–296 (WKEE…GEEP), and 310–351 (EAQA…QLAK). Thr230 is subject to Phosphothreonine. Residues 238-247 (SSSSERSQPG) show a composition bias toward low complexity. Over residues 328–343 (RPTRKGRERAGKGQKP) the composition is skewed to basic residues. A helical transmembrane segment spans residues 367–390 (LSAILLAFIVTWTPYNIMVLVSTF). At 391–397 (CKDCVPE) the chain is on the extracellular side. The helical transmembrane segment at 398 to 420 (TLWELGYWLCYVNSTINPMCYAL) threads the bilayer. The Cytoplasmic portion of the chain corresponds to 421–460 (CNKAFRDTFRLLLLCRWDKRRWRKIPKRPGSVHRTPSRQC). Thr428 is modified (phosphothreonine). Ser451 carries the post-translational modification Phosphoserine. At Thr455 the chain carries Phosphothreonine. A Phosphoserine modification is found at Ser457.

It belongs to the G-protein coupled receptor 1 family. Muscarinic acetylcholine receptor subfamily. CHRM1 sub-subfamily. In terms of assembly, interacts with GPRASP2. Interacts with TMEM147.

The protein resides in the cell membrane. It is found in the postsynaptic cell membrane. The muscarinic acetylcholine receptor mediates various cellular responses, including inhibition of adenylate cyclase, breakdown of phosphoinositides and modulation of potassium channels through the action of G proteins. Primary transducing effect is Pi turnover. The protein is Muscarinic acetylcholine receptor M1 (CHRM1) of Sus scrofa (Pig).